A 155-amino-acid chain; its full sequence is Aspartate carbamoyltransferase regulatory chain (155 aa).

4 residues coordinate Zn(2+): cysteine 110, cysteine 115, cysteine 139, and cysteine 142.

The protein belongs to the PyrI family. As to quaternary structure, contains catalytic and regulatory chains. Requires Zn(2+) as cofactor.

Functionally, involved in allosteric regulation of aspartate carbamoyltransferase. The sequence is that of Aspartate carbamoyltransferase regulatory chain from Yersinia pestis bv. Antiqua (strain Antiqua).